The primary structure comprises 371 residues: Alanine racemase (371 aa).

The Proton acceptor; specific for D-alanine role is filled by Lys-40. At Lys-40 the chain carries N6-(pyridoxal phosphate)lysine. Substrate is bound at residue Arg-136. Catalysis depends on Tyr-263, which acts as the Proton acceptor; specific for L-alanine. Met-310 contributes to the substrate binding site.

Belongs to the alanine racemase family. Pyridoxal 5'-phosphate is required as a cofactor.

The catalysed reaction is L-alanine = D-alanine. It functions in the pathway amino-acid biosynthesis; D-alanine biosynthesis; D-alanine from L-alanine: step 1/1. In terms of biological role, catalyzes the interconversion of L-alanine and D-alanine. May also act on other amino acids. The sequence is that of Alanine racemase (alr) from Streptococcus mutans serotype c (strain ATCC 700610 / UA159).